A 280-amino-acid polypeptide reads, in one-letter code: uncharacterized protein (280 aa).

3 helical membrane passes run 10 to 29 (IQQN…LLFN), 164 to 186 (FVFV…FAFI), and 209 to 228 (IFGL…YFLL).

Its subcellular location is the cell membrane. This is an uncharacterized protein from Bacillus subtilis (strain 168).